The primary structure comprises 239 residues: MAEYLASIFGTEKDKVNCSFYFKIGACRHGDRCSRLHNKPTFSQTIALLNIYRNPQNSSQSADGLRCAVSDVEMQEHYDEFFEEVFTEMEEKYGEVEEMNVCDNLGDHLVGNVYVKFRREEDAEKAVIDLNNRWFNGQPIHAELSPVTDFREACCRQYEMGECTRGGFCNFMHLKPISRELRRELYGRRRKKHRSRSRSRERRSRSRDRGRGGGGGGGGGGGRERDRRRSRDRERSGRF.

A2 bears the N-acetylalanine mark. A C3H1-type 1 zinc finger spans residues 12–40 (EKDKVNCSFYFKIGACRHGDRCSRLHNKP). K39 carries the post-translational modification N6-methyllysine. Phosphoserine is present on residues S61 and S145. The region spanning 65–147 (LRCAVSDVEM…QPIHAELSPV (83 aa)) is the RRM domain. A C3H1-type 2 zinc finger spans residues 149-176 (DFREACCRQYEMGECTRGGFCNFMHLKP). R165 is subject to Omega-N-methylarginine. The tract at residues 183 to 239 (RELYGRRRKKHRSRSRSRERRSRSRDRGRGGGGGGGGGGGRERDRRRSRDRERSGRF) is disordered. Over residues 188–208 (RRRKKHRSRSRSRERRSRSRD) the composition is skewed to basic residues. Positions 212-221 (GGGGGGGGGG) are enriched in gly residues. Positions 222-239 (GRERDRRRSRDRERSGRF) are enriched in basic and acidic residues.

Belongs to the splicing factor SR family. As to quaternary structure, identified in the spliceosome C complex. Heterodimer with U2AF2. Interacts (via RS domain) with PHF5A (via N-terminus). Interacts with ZRANB2. Interacts with SDE2. Interacts with SF3B1. In terms of tissue distribution, expressed in primary spermatocytes and elongating spermatids (at protein level).

It localises to the nucleus. Its subcellular location is the nucleus speckle. Plays a critical role in both constitutive and enhancer-dependent splicing by mediating protein-protein interactions and protein-RNA interactions required for accurate 3'-splice site selection. Recruits U2 snRNP to the branch point. Directly mediates interactions between U2AF2 and proteins bound to the enhancers and thus may function as a bridge between U2AF2 and the enhancer complex to recruit it to the adjacent intron. The sequence is that of Splicing factor U2AF 35 kDa subunit (U2af1) from Mus musculus (Mouse).